Consider the following 364-residue polypeptide: Probable UDP-arabinopyranose mutase 4 (364 aa).

The DXD motif signature appears at 106–108; it reads DDD. The N-linked (Glc...) arginine glycan is linked to R154.

This sequence belongs to the RGP family. In terms of assembly, heteromers with RGP1 and RGP2. It depends on Mn(2+) as a cofactor. Mg(2+) is required as a cofactor. In terms of processing, reversibly glycosylated in vitro by UDP-glucose, UDP-xylose and UDP-galactose, but not UDP-mannose. As to expression, specifically expressed in developing seeds.

It localises to the cytoplasm. The protein resides in the cytosol. Its subcellular location is the golgi apparatus. It catalyses the reaction UDP-beta-L-arabinofuranose = UDP-beta-L-arabinopyranose. Probable UDP-L-arabinose mutase involved in the biosynthesis of cell wall non-cellulosic polysaccharides. This is Probable UDP-arabinopyranose mutase 4 from Arabidopsis thaliana (Mouse-ear cress).